The sequence spans 239 residues: ATP synthase subunit a (239 aa).

The next 6 membrane-spanning stretches (helical) occupy residues 31–51 (FLLQ…LGLG), 91–111 (VFPL…LGMI), 125–145 (AACA…FHGV), 151–171 (FMGP…IGHI), 194–214 (ILFF…LGLF), and 215–235 (TGFI…AGAI).

The protein belongs to the ATPase A chain family. In terms of assembly, F-type ATPases have 2 components, CF(1) - the catalytic core - and CF(0) - the membrane proton channel. CF(1) has five subunits: alpha(3), beta(3), gamma(1), delta(1), epsilon(1). CF(0) has three main subunits: a(1), b(2) and c(9-12). The alpha and beta chains form an alternating ring which encloses part of the gamma chain. CF(1) is attached to CF(0) by a central stalk formed by the gamma and epsilon chains, while a peripheral stalk is formed by the delta and b chains.

The protein resides in the cell inner membrane. Functionally, key component of the proton channel; it plays a direct role in the translocation of protons across the membrane. The protein is ATP synthase subunit a of Syntrophobacter fumaroxidans (strain DSM 10017 / MPOB).